Consider the following 632-residue polypeptide: Effector protein hopAD1 (632 aa).

A disordered region spans residues 13 to 34 (TAVDSSLPTSATSQTISNTKSR). The segment covering 15–32 (VDSSLPTSATSQTISNTK) has biased composition (polar residues).

The protein localises to the secreted. This is Effector protein hopAD1 (hopAD1) from Pseudomonas syringae pv. tomato (strain ATCC BAA-871 / DC3000).